Here is a 375-residue protein sequence, read N- to C-terminus: Stimulator of interferon genes protein 2 (375 aa).

Helical transmembrane passes span 30 to 50 (TATV…LLAV), 60 to 80 (IHFL…GELV), 114 to 134 (AGSI…VLYE), and 144 to 164 (YPIL…LVGL). 2',3'-cGAMP contacts are provided by Tyr195, Arg256, and Arg262.

The protein belongs to the STING family.

It localises to the membrane. In terms of biological role, facilitator of innate immune signaling that acts as a sensor of second messenger signals produced by cyclic GMP-AMP synthase-like receptors (cGLRs) and promotes the production of type I interferon. Innate immune response is triggered in response to nucleotides from viruses and bacteria delivered to the cytoplasm. Acts by binding cyclic dinucleotides: recognizes and binds 2'-3' linked cGAMP (2'-3'-cGAMP), a second messengers produced by cGLRs in response to nucleotides in the cytosol, such as double-stranded RNA (dsRNA). Upon binding to 2'-3'-cGAMP, oligomerizes and promotes the recruitment and subsequent activation of the transcription factor IRF3 to induce expression of type I interferon. This Stylophora pistillata (Smooth cauliflower coral) protein is Stimulator of interferon genes protein 2.